Consider the following 262-residue polypeptide: Apolipoprotein A-I (262 aa).

Positions Met-1–Ala-18 are cleaved as a signal peptide. The segment at Val-32–Lys-63 is 3 X approximate tandem repeats. A run of 2 repeats spans residues Val-64–Ala-85 and Tyr-87–Met-107. Positions Val-64–Ala-262 are 10 X approximate tandem repeats. A 3; half-length repeat occupies Lys-108–Glu-118. Tandem repeats lie at residues Pro-119 to Glu-140, Pro-141 to Glu-162, Pro-163 to Met-184, Pro-185 to Ala-206, and Pro-207 to Gly-228. One copy of the 9; half-length repeat lies at Pro-229–Gly-239. The stretch at Pro-240–Ala-262 is repeat 10.

Belongs to the apolipoprotein A1/A4/E family.

Its subcellular location is the secreted. Functionally, participates in the reverse transport of cholesterol from tissues to the liver for excretion by promoting cholesterol efflux from tissues and by acting as a cofactor for the lecithin cholesterol acyltransferase (LCAT). The chain is Apolipoprotein A-I (apoa1) from Salmo trutta (Brown trout).